A 150-amino-acid chain; its full sequence is Endoribonuclease YbeY (150 aa).

The Zn(2+) site is built by H112, H116, and D122.

The protein belongs to the endoribonuclease YbeY family. Zn(2+) serves as cofactor.

The protein localises to the cytoplasm. In terms of biological role, single strand-specific metallo-endoribonuclease involved in late-stage 70S ribosome quality control and in maturation of the 3' terminus of the 16S rRNA. This Protochlamydia amoebophila (strain UWE25) protein is Endoribonuclease YbeY.